The following is a 1116-amino-acid chain: Ubiquitin C-terminal hydrolase 12 (1116 aa).

The span at 1–10 (MTMMTPPPVD) shows a compositional bias: pro residues. The disordered stretch occupies residues 1–52 (MTMMTPPPVDQPEDEEMLVPNSDLVDGPAQPMEVTQPETAASTVENQPAEDP). Residues 36–46 (QPETAASTVEN) are compositionally biased toward polar residues. The MATH domain occupies 54 to 179 (TLKFTWTIPN…NDTVLVEAEV (126 aa)). In terms of domain architecture, USP spans 199-524 (VGLKNQGATC…NAYMLVYIRE (326 aa)). The active-site Nucleophile is the C208. H455 (proton acceptor) is an active-site residue.

Belongs to the peptidase C19 family. As to quaternary structure, interacts with SIC/RON3.

It carries out the reaction Thiol-dependent hydrolysis of ester, thioester, amide, peptide and isopeptide bonds formed by the C-terminal Gly of ubiquitin (a 76-residue protein attached to proteins as an intracellular targeting signal).. In terms of biological role, recognizes and hydrolyzes the peptide bond at the C-terminal Gly of ubiquitin. Involved in the processing of poly-ubiquitin precursors as well as that of ubiquitinated proteins. Positive regulator of root meristem development that, together with UBP13, prevents the ubiquitination and turnover of RGFR1 induced by the RGF1 hormone peptide, thus influencing PLT1 and PLT2 expression. This chain is Ubiquitin C-terminal hydrolase 12, found in Arabidopsis thaliana (Mouse-ear cress).